The sequence spans 422 residues: UDP-N-acetylglucosamine 1-carboxyvinyltransferase 2 (422 aa).

22–23 (KN) is a phosphoenolpyruvate binding site. A UDP-N-acetyl-alpha-D-glucosamine-binding site is contributed by Arg93. Catalysis depends on Cys117, which acts as the Proton donor. Residue Cys117 is modified to 2-(S-cysteinyl)pyruvic acid O-phosphothioketal. UDP-N-acetyl-alpha-D-glucosamine contacts are provided by residues 122–126 (RPVDL), Asp308, and Ile330.

It belongs to the EPSP synthase family. MurA subfamily.

Its subcellular location is the cytoplasm. The catalysed reaction is phosphoenolpyruvate + UDP-N-acetyl-alpha-D-glucosamine = UDP-N-acetyl-3-O-(1-carboxyvinyl)-alpha-D-glucosamine + phosphate. Its pathway is cell wall biogenesis; peptidoglycan biosynthesis. Cell wall formation. Adds enolpyruvyl to UDP-N-acetylglucosamine. This is UDP-N-acetylglucosamine 1-carboxyvinyltransferase 2 from Legionella pneumophila (strain Lens).